The sequence spans 363 residues: ADP-ribosylhydrolase ARH3 (363 aa).

Glu41 contributes to the Mg(2+) binding site. Thr64 carries the post-translational modification Phosphothreonine. Mg(2+) contacts are provided by Thr76, Asp77, and Asp78. Position 77 (Asp77) interacts with substrate. Substrate is bound by residues 146–152, His182, Leu235, and Ile271; that span reads KGSYGNG. Residues Asp314, Asp316, and Thr317 each coordinate Mg(2+).

It belongs to the ADP-ribosylglycohydrolase family. As to quaternary structure, monomer. The cofactor is Mg(2+). As to expression, ubiquitous. Expressed in skin fibroblasts.

It localises to the nucleus. The protein resides in the cytoplasm. Its subcellular location is the chromosome. The protein localises to the mitochondrion matrix. The catalysed reaction is [(1''-&gt;2')-ADP-alpha-D-ribose](n) + H2O = [(1''-&gt;2')-ADP-alpha-D-ribose](n-1) + ADP-D-ribose. It catalyses the reaction 1''-O-acetyl-ADP-alpha-D-ribose + H2O = ADP-D-ribose + acetate + H(+). The enzyme catalyses O-(ADP-D-ribosyl)-L-seryl-[protein] + H2O = ADP-D-ribose + L-seryl-[protein]. It carries out the reaction alpha-NAD(+) + H2O = ADP-D-ribose + nicotinamide + H(+). With respect to regulation, the protein undergoes a dramatic conformational switch from closed to open states upon substrate-binding, which enables specific substrate recognition for the 1''-O-linkage. The glutamate flap (Glu-41) blocks substrate entrance to Mg(2+) in the unliganded closed state. In presence of substrate, Glu-41 is ejected from the active site: this closed-to-open transition significantly widens the substrate-binding channel and precisely positions the scissile 1''-O-linkage for cleavage while securing tightly 2'- and 3'-hydroxyls of ADP-ribose. Its function is as follows. ADP-ribosylhydrolase that preferentially hydrolyzes the scissile alpha-O-linkage attached to the anomeric C1'' position of ADP-ribose and acts on different substrates, such as proteins ADP-ribosylated on serine and threonine, free poly(ADP-ribose) and O-acetyl-ADP-D-ribose. Specifically acts as a serine mono-ADP-ribosylhydrolase by mediating the removal of mono-ADP-ribose attached to serine residues on proteins, thereby playing a key role in DNA damage response. Serine ADP-ribosylation of proteins constitutes the primary form of ADP-ribosylation of proteins in response to DNA damage. Does not hydrolyze ADP-ribosyl-arginine, -cysteine, -diphthamide, or -asparagine bonds. Also able to degrade protein free poly(ADP-ribose), which is synthesized in response to DNA damage: free poly(ADP-ribose) acts as a potent cell death signal and its degradation by ADPRHL2 protects cells from poly(ADP-ribose)-dependent cell death, a process named parthanatos. Also hydrolyzes free poly(ADP-ribose) in mitochondria. Specifically digests O-acetyl-ADP-D-ribose, a product of deacetylation reactions catalyzed by sirtuins. Specifically degrades 1''-O-acetyl-ADP-D-ribose isomer, rather than 2''-O-acetyl-ADP-D-ribose or 3''-O-acetyl-ADP-D-ribose isomers. This Homo sapiens (Human) protein is ADP-ribosylhydrolase ARH3.